The following is a 489-amino-acid chain: Lysine-specific permease LysP (489 aa).

Over 2–22 (VSETKTTEAPGLRRELKARHL) the chain is Cytoplasmic. Residues 23–43 (TMIAIGGSIGTGLFVASGATI) traverse the membrane as a helical segment. The Periplasmic segment spans residues 44–45 (SQ). Residues 46-66 (AGPGGALLSYMLIGLMVYFLM) form a helical membrane-spanning segment. Residues 67–105 (TSLGELAAYMPVSGSFATYGQNYVEEGFGFALGWNYWYN) lie on the Cytoplasmic side of the membrane. A helical membrane pass occupies residues 106–126 (WAVTIAVDLVAAQLVMSWWFP). Residues 127 to 128 (DT) are Periplasmic-facing. The chain crosses the membrane as a helical span at residues 129 to 149 (PGWIWSALFLGVIFLLNYISV). The Cytoplasmic segment spans residues 150–161 (RGFGEAEYWFSL). The chain crosses the membrane as a helical span at residues 162–182 (IKVTTVIVFIIVGVLMIIGIF). Over 183-197 (KGAQPAGWSNWTIGE) the chain is Periplasmic. Residues 198–218 (APFAGGFAAMIGVAMIVGFSF) form a helical membrane-spanning segment. At 219–244 (QGTELIGIAAGESEDPAKNIPRAVRQ) the chain is on the cytoplasmic side. A helical transmembrane segment spans residues 245-265 (VFWRILLFYVFAILIISLIIP). Residues 266–290 (YTDPSLLRNDVKDISVSPFTLVFQH) lie on the Periplasmic side of the membrane. Residues 291–311 (AGLLSAAAVMNAVILTAVLSA) form a helical membrane-spanning segment. At 312 to 346 (GNSGMYASTRMLYTLACDGKAPRIFAKLSRGGVPR) the chain is on the cytoplasmic side. The helical transmembrane segment at 347–367 (NALYATTVIAGLCFLTSMFGN) threads the bilayer. Topologically, residues 368–370 (QTV) are periplasmic. A helical membrane pass occupies residues 371–391 (YLWLLNTSGMTGFIAWLGIAI). The Cytoplasmic segment spans residues 392 to 413 (SHYRFRRGYVLQGHDINDLPYR). A helical transmembrane segment spans residues 414–434 (SGFFPLGPIFAFILCLIITLG). Topologically, residues 435-446 (QNYEAFLKDTID) are periplasmic. The chain crosses the membrane as a helical span at residues 447–467 (WGGVAATYIGIPLFLIIWFGY). Residues 468 to 489 (KLIKGTHFVRYSEMKFPQNDKK) are Cytoplasmic-facing.

This sequence belongs to the amino acid-polyamine-organocation (APC) superfamily. Amino acid transporter (AAT) (TC 2.A.3.1) family. In terms of assembly, interacts strongly with the transcriptional activator CadC in the absence of lysine or at low lysine concentrations. Interaction is markedly attenuated under increasing lysine levels. Concomitant pH-dependent protonation of periplasmic amino acids in both proteins dissolves their electrostatic connections resulting in further destabilization of the CadC/LysP interaction. Low pH promotes oligomerization of LysP.

The protein localises to the cell inner membrane. It catalyses the reaction L-lysine(out) + H(+)(out) = L-lysine(in) + H(+)(in). Functionally, permease involved in lysine uptake. In addition, functions as a lysine sensor that mediates the lysine-dependent regulation of the transcriptional activator CadC. In the absence of lysine, or at low lysine concentrations, LysP inhibits CadC by an interaction with the transmembrane domain of CadC. In the presence of lysine, LysP loses its ability to interact with and inhibit CadC, and acts as a lysine permease. This is Lysine-specific permease LysP from Escherichia coli (strain K12).